Reading from the N-terminus, the 314-residue chain is Nodulation protein D 1 (314 aa).

The 58-residue stretch at 6–63 (LDLNLLVALDALMTERNLTAAARSINLSQPAMSAAVGRLRTYFNDDLFTMVGRELVPT) folds into the HTH lysR-type domain. Residues 23–42 (LTAAARSINLSQPAMSAAVG) constitute a DNA-binding region (H-T-H motif).

Belongs to the LysR transcriptional regulatory family.

In terms of biological role, nodD regulates the expression of the nodABCFE genes which encode other nodulation proteins. NodD is also a negative regulator of its own expression. Binds flavonoids as inducers. This is Nodulation protein D 1 (nodD1) from Rhizobium leguminosarum bv. phaseoli.